Here is a 164-residue protein sequence, read N- to C-terminus: C-phycoerythrin alpha chain (164 aa).

Residues cysteine 82 and cysteine 139 each contribute to the (2R,3E)-phycoerythrobilin site.

It belongs to the phycobiliprotein family. As to quaternary structure, heterodimer of an alpha and a beta chain. In terms of processing, contains two covalently linked bilin chromophores.

It is found in the cellular thylakoid membrane. Its function is as follows. Light-harvesting photosynthetic bile pigment-protein from the phycobiliprotein complex. The protein is C-phycoerythrin alpha chain (cpeA) of Synechocystis sp. (strain PCC 6701).